Reading from the N-terminus, the 355-residue chain is MGCRQSSEEKEAARRSRRIDRHLRSESQRQRREIKLLLLGTSNSGKSTIVKQMKIIHSGGFNLEACKEYKPLIIYNAIDSLTRIIRALAALKIDFHNPDRAYDAVQLFALTGPAESKGEITPELLGVMRRLWADPGAQACFGRSSEYHLEDNAAYYLNDLERIAAPDYIPTVEDILRSRDMTTGIVENKFTFKELTFKMVDVGGQRSERKKWIHCFEGVTAIIFCVELSGYDLKLYEDNQTSRMAESLRLFDSICNNNWFINTSLILFLNKKDLLSEKIRRIPLSVCFPEYKGQNTYEEAAVYIQRQFEDLNRNKETKEIYSHFTCATDTSNIQFVFDAVTDVIIQNNLKYIGLC.

Positions 1–14 (MGCRQSSEEKEAAR) are enriched in basic and acidic residues. Residues 1–26 (MGCRQSSEEKEAARRSRRIDRHLRSE) form a disordered region. Glycine 2 carries N-myristoyl glycine lipidation. Residue cysteine 3 is the site of S-palmitoyl cysteine attachment. The region spanning 32-355 (REIKLLLLGT…QNNLKYIGLC (324 aa)) is the G-alpha domain. The G1 motif stretch occupies residues 35–48 (KLLLLGTSNSGKST). Residues 40 to 47 (GTSNSGKS), 176 to 182 (LRSRDMT), 201 to 205 (DVGGQ), 270 to 273 (NKKD), and alanine 327 each bind GTP. Mg(2+) contacts are provided by serine 47 and threonine 182. Residues 174 to 182 (DILRSRDMT) form a G2 motif region. The G3 motif stretch occupies residues 197 to 206 (FKMVDVGGQR). The G4 motif stretch occupies residues 266 to 273 (ILFLNKKD). Residues 325-330 (TCATDT) are G5 motif.

Belongs to the G-alpha family. G(i/o/t/z) subfamily. G-proteins are composed of 3 units; alpha, beta and gamma. The alpha chain contains the guanine nucleotide binding site. Interacts with ADGRB2.

It localises to the membrane. Its function is as follows. Guanine nucleotide-binding proteins (G proteins) are involved as modulators or transducers in various transmembrane signaling systems. This chain is Guanine nucleotide-binding protein G(z) subunit alpha (Gnaz), found in Rattus norvegicus (Rat).